We begin with the raw amino-acid sequence, 422 residues long: Transcription termination factor Rho (422 aa).

The Rho RNA-BD domain occupies 52-127; it reads EVGGDGVLEV…TRVTKINFDD (76 aa). Residues 173–178, 185–190, and arginine 216 contribute to the ATP site; these read GKGQRG and RTGKTV.

The protein belongs to the Rho family. Homohexamer. The homohexamer assembles into an open ring structure.

Facilitates transcription termination by a mechanism that involves Rho binding to the nascent RNA, activation of Rho's RNA-dependent ATPase activity, and release of the mRNA from the DNA template. The sequence is that of Transcription termination factor Rho from Cereibacter sphaeroides (strain ATCC 17023 / DSM 158 / JCM 6121 / CCUG 31486 / LMG 2827 / NBRC 12203 / NCIMB 8253 / ATH 2.4.1.) (Rhodobacter sphaeroides).